Here is a 336-residue protein sequence, read N- to C-terminus: MNAPDTLTGLEANAPVTEEAPAASEAERKRAHTRREQKEQYENNKLFKRLARQVGQAIGDFNMIEDGDKVMVCLSGGKDSYAMLDVLMRLRERAPIHFDIVAVNLDQKQPGFPEHVLPEYLSKLDIPYHIENQDTYSIVKRLVPEGKTTCSLCSRLRRGILYRVAGELGATKIALGHHRDDILQTLLLNLFYGGKLKGMPPKLQSDDGKNVVIRPLAYVKETDLEKYAELRQFPIIPCNLCGSQPNLKRAEMKALIREWDKRFPGRVDNMFNALSNVVPSHLMDHKLFPFASLRATGEADPHGDIAFDEEPCSADSASNQTQRPSQTVSFVQFDDI.

The tract at residues 1 to 42 is disordered; that stretch reads MNAPDTLTGLEANAPVTEEAPAASEAERKRAHTRREQKEQYE. Positions 75 to 80 match the PP-loop motif motif; it reads SGGKDS. Residues cysteine 150, cysteine 153, and cysteine 241 each coordinate [4Fe-4S] cluster. Positions 301-328 are disordered; it reads PHGDIAFDEEPCSADSASNQTQRPSQTV. Polar residues predominate over residues 315-328; it reads DSASNQTQRPSQTV.

The protein belongs to the TtcA family. As to quaternary structure, homodimer. It depends on Mg(2+) as a cofactor. [4Fe-4S] cluster serves as cofactor.

Its subcellular location is the cytoplasm. It catalyses the reaction cytidine(32) in tRNA + S-sulfanyl-L-cysteinyl-[cysteine desulfurase] + AH2 + ATP = 2-thiocytidine(32) in tRNA + L-cysteinyl-[cysteine desulfurase] + A + AMP + diphosphate + H(+). The protein operates within tRNA modification. Functionally, catalyzes the ATP-dependent 2-thiolation of cytidine in position 32 of tRNA, to form 2-thiocytidine (s(2)C32). The sulfur atoms are provided by the cysteine/cysteine desulfurase (IscS) system. This chain is tRNA-cytidine(32) 2-sulfurtransferase, found in Paraburkholderia phymatum (strain DSM 17167 / CIP 108236 / LMG 21445 / STM815) (Burkholderia phymatum).